The following is a 215-amino-acid chain: GTP-binding nuclear protein Ran (215 aa).

Residues aspartate 6–aspartate 170 form the Small GTPase Ran-type domain. Residues aspartate 17–threonine 24, glutamate 35–threonine 41, glycine 67, asparagine 121–aspartate 124, and serine 149–lysine 151 each bind GTP. The switch-I stretch occupies residues lysine 36–valine 44. The interval glycine 67–glutamine 83 is switch-II. Residues aspartate 210–leucine 215 form an interaction with RANBP1 region.

Belongs to the small GTPase superfamily. Ran family. As to quaternary structure, monomer. Interacts with RANGAP1, which promotes RAN-mediated GTP hydrolysis. Interacts with KPNB1. Interaction with KPNB1 inhibits RANGAP1-mediated stimulation of GTPase activity. Interacts with RCC1 which promotes the exchange of RAN-bound GDP by GTP. Interaction with KPNB1 inhibits RCC1-mediated exchange of RAN-bound GDP by GTP. Interacts (GTP-bound form) with TNPO1; the interaction is direct. Interacts with KPNB1 and with TNPO1; both inhibit RAN GTPase activity. Interacts (via C-terminus) with RANBP1, which alleviates the inhibition of RAN GTPase activity. Interacts with RANGRF, which promotes the release of bound guanine nucleotide. RANGRF and RCC1 compete for an overlapping binding site on RAN. Identified in a complex with KPNA2 and CSE1L; interaction with RANBP1 mediates dissociation of RAN from this complex. Interaction with both RANBP1 and KPNA2 promotes dissociation of the complex between RAN and KPNB1. Identified in a complex composed of RAN, RANGAP1 and RANBP1. Identified in a complex that contains TNPO1, RAN and RANBP1. Identified in a nuclear export complex with XPO1. Interaction with RANBP1 or RANBP2 induces a conformation change in the complex formed by XPO1 and RAN that triggers the release of the nuclear export signal of cargo proteins. Component of a nuclear export receptor complex composed of KPNB1, RAN, SNUPN and XPO1. Requires Mg(2+) as cofactor.

Its subcellular location is the nucleus. It is found in the nucleus envelope. It localises to the cytoplasm. The protein resides in the cytosol. In terms of biological role, GTPase involved in nucleocytoplasmic transport, participating both to the import and the export from the nucleus of proteins and RNAs. Switches between a cytoplasmic GDP- and a nuclear GTP-bound state by nucleotide exchange and GTP hydrolysis. Nuclear import receptors such as importin beta bind their substrates only in the absence of GTP-bound RAN and release them upon direct interaction with GTP-bound RAN, while export receptors behave in the opposite way. Thereby, RAN controls cargo loading and release by transport receptors in the proper compartment and ensures the directionality of the transport. Interaction with RANBP1 induces a conformation change in the complex formed by XPO1 and RAN that triggers the release of the nuclear export signal of cargo proteins. RAN (GTP-bound form) triggers microtubule assembly at mitotic chromosomes and is required for normal mitotic spindle assembly and chromosome segregation. Required for normal progress through mitosis. The chain is GTP-binding nuclear protein Ran (ran-1) from Onchocerca volvulus.